The chain runs to 388 residues: Chorismate synthase (388 aa).

Positions 39 and 45 each coordinate NADP(+). Residues 130–132 (RSS), 251–252 (NA), A296, 311–315 (KPIPT), and R337 each bind FMN.

This sequence belongs to the chorismate synthase family. In terms of assembly, homotetramer. It depends on FMNH2 as a cofactor.

The catalysed reaction is 5-O-(1-carboxyvinyl)-3-phosphoshikimate = chorismate + phosphate. Its pathway is metabolic intermediate biosynthesis; chorismate biosynthesis; chorismate from D-erythrose 4-phosphate and phosphoenolpyruvate: step 7/7. Catalyzes the anti-1,4-elimination of the C-3 phosphate and the C-6 proR hydrogen from 5-enolpyruvylshikimate-3-phosphate (EPSP) to yield chorismate, which is the branch point compound that serves as the starting substrate for the three terminal pathways of aromatic amino acid biosynthesis. This reaction introduces a second double bond into the aromatic ring system. This is Chorismate synthase from Streptococcus equi subsp. zooepidemicus (strain H70).